The sequence spans 353 residues: Glycerol-3-phosphate dehydrogenase [NAD(+)], cytoplasmic (353 aa).

Ala2 is subject to Blocked amino end (Ala). Residues 11 to 16 (GSGNWG), Phe98, Lys121, and Ala155 each bind NAD(+). Lys121 contacts substrate. Lys206 (proton acceptor) is an active-site residue. NAD(+)-binding residues include Arg270 and Gln299. Residue 270-271 (RN) coordinates substrate.

Belongs to the NAD-dependent glycerol-3-phosphate dehydrogenase family. Homodimer.

The protein localises to the cytoplasm. The catalysed reaction is sn-glycerol 3-phosphate + NAD(+) = dihydroxyacetone phosphate + NADH + H(+). It participates in phospholipid metabolism; alpha-glycerophosphate cycle. This is Glycerol-3-phosphate dehydrogenase [NAD(+)], cytoplasmic from Drosophila virilis (Fruit fly).